Consider the following 695-residue polypeptide: Elongation factor G 2 (695 aa).

Positions 5–280 (SKYRNIGIFA…AVVDYLPSPT (276 aa)) constitute a tr-type G domain. Residues 14–21 (AHVDAGKT), 78–82 (DTPGH), and 132–135 (NKLD) contribute to the GTP site.

The protein belongs to the TRAFAC class translation factor GTPase superfamily. Classic translation factor GTPase family. EF-G/EF-2 subfamily.

Its subcellular location is the cytoplasm. Catalyzes the GTP-dependent ribosomal translocation step during translation elongation. During this step, the ribosome changes from the pre-translocational (PRE) to the post-translocational (POST) state as the newly formed A-site-bound peptidyl-tRNA and P-site-bound deacylated tRNA move to the P and E sites, respectively. Catalyzes the coordinated movement of the two tRNA molecules, the mRNA and conformational changes in the ribosome. This is Elongation factor G 2 from Vibrio vulnificus (strain YJ016).